A 32-amino-acid polypeptide reads, in one-letter code: U3-cyrtautoxin-As1a (32 aa).

Cystine bridges form between Cys-4/Cys-19, Cys-11/Cys-24, and Cys-18/Cys-29.

Belongs to the neurotoxin 14 (magi-1) family. The protein to aptotoxin III. Expressed by the venom gland.

The protein localises to the secreted. Functionally, is both paralytic and lethal, when injected into lepidopteran larvae. Is a slower acting toxin, being lethal at 24 hours, but not paralytic at 1 hour post-injection. The protein is U3-cyrtautoxin-As1a of Apomastus schlingeri (Trap-door spider).